Here is a 423-residue protein sequence, read N- to C-terminus: Glycine-rich protein 1 (423 aa).

The N-terminal stretch at 1–20 (MKKICLTFVFLLSLFPIYSS) is a signal peptide. 4 disordered regions span residues 28–47 (TIESGSSKSSGSSVGNAGPA), 78–133 (DDDN…SKKN), 159–219 (KGGS…GAGA), and 236–288 (GASA…ASAG). Positions 31-42 (SGSSKSSGSSVG) are enriched in low complexity. 2 stretches are compositionally biased toward basic and acidic residues: residues 81–93 (NKDKKKNDEDGKT) and 102–111 (QNGDDVKSDN). A compositionally biased stretch (gly residues) spans 159–172 (KGGSANNGGEGGAT). The segment covering 173-183 (SAGSAGATSGA) has biased composition (low complexity). Composition is skewed to gly residues over residues 205-219 (GAGGESGGAGAGAGA) and 236-247 (GASAGAGAGGAQ). Residues 248–284 (GDAEAASAGSTAGSTSSGGAAASGASSGAGSSDSGQG) are compositionally biased toward low complexity.

In terms of tissue distribution, nacreous layer of shell (at protein level).

The protein localises to the secreted. The polypeptide is Glycine-rich protein 1 (Pinctada maxima (Silver-lipped pearl oyster)).